A 227-amino-acid polypeptide reads, in one-letter code: Ribose-5-phosphate isomerase A (227 aa).

Residues 26 to 29 (TGST), 82 to 85 (DGAD), and 95 to 98 (KGGG) each bind substrate. Glu-104 serves as the catalytic Proton acceptor. A substrate-binding site is contributed by Lys-122.

The protein belongs to the ribose 5-phosphate isomerase family. As to quaternary structure, homodimer.

It catalyses the reaction aldehydo-D-ribose 5-phosphate = D-ribulose 5-phosphate. It functions in the pathway carbohydrate degradation; pentose phosphate pathway; D-ribose 5-phosphate from D-ribulose 5-phosphate (non-oxidative stage): step 1/1. Its function is as follows. Catalyzes the reversible conversion of ribose-5-phosphate to ribulose 5-phosphate. This chain is Ribose-5-phosphate isomerase A, found in Streptococcus equi subsp. zooepidemicus (strain H70).